A 581-amino-acid chain; its full sequence is MNTVDPITLAVVRGALETAQREMTLTLEKTSRSSVFNLAHDYSNALFDHLPEMILQGQDIPIHLGSLIPAMKCVAGFFGDEIAEGDVIYHNDPAYMGSHILDCCMYKPVFYKGELVFWTVCKGHLTDIGGPVPAGYNPDAKEIYAEGLRIPPVKLWAQGQRREDVINLLLTNMRARAYQEGDLNAQYGACSVGERHLIELLDRYGVDQVRACITELKDMADRHMRALLRDVPDGFYSGTAILEDSGHGLGELSITAQVEIRGDEAHVLIESPPQVPYFINSYAGNSISGVYLGLMMFAQVPPPYNEGLYRCVSVDLGPSGTLCNAQEPAPHVNCTTTPMETLADAVRLALEQAAPERVTASWGHASGINIAGHDPRNNNDEYVTMVLASVISGAGANKAMDGWPACGPLCCFGALMSGDIELLEYSYPVLIHRYSLMTDSGGAGEFRGGSGTRLELEPLKHAMTVVGFGEGRQLPTAGAAGAKNVLLEPKLGRLIHRHVDGEEDHYIQNTLLTAQPGERVINVNPGGGGYGDPLRRPLATVLADVRNGLVSIDGARLEYGVVIDGNGQLDEAATHAHRAAH.

Zn(2+) is bound by residues aspartate 41, histidine 99, aspartate 102, and histidine 124.

This sequence belongs to the HyuB family. The caprolactamase is a heterotetramer composed of two alpha subunits (CapA) and two beta subunits (CapB). Zn(2+) is required as a cofactor.

Its activity is regulated as follows. Activity is dependent on the presence of ATP and bicarbonate. The requirement for bicarbonate may be related to allosteric activation through conformational effects, but it is also conceivable that carboxyphosphate is formed and acts as a mediator in caprolactam activation, forming carboxy- or phospholactim. Functionally, component of a caprolactamase involved in the degradation of caprolactam, an industrial compound mainly used in the production of Nylon 6. Catalyzes the ATP-dependent hydrolysis of the caprolactam ring to form 6-aminocaproic acid (6-ACA). The beta subunit is responsible for hydrolytic lactam ring opening. The enzyme cannot use 5-oxoproline. The polypeptide is Caprolactamase subunit beta (Pseudomonas jessenii).